The following is a 327-amino-acid chain: Malate dehydrogenase (327 aa).

11-17 is an NAD(+) binding site; it reads GAAGQIG. Residues R92 and R98 each coordinate substrate. NAD(+)-binding positions include N105, Q112, and 129–131; that span reads VGN. Residues N131 and R162 each coordinate substrate. The active-site Proton acceptor is the H187.

Belongs to the LDH/MDH superfamily. MDH type 2 family.

It carries out the reaction (S)-malate + NAD(+) = oxaloacetate + NADH + H(+). In terms of biological role, catalyzes the reversible oxidation of malate to oxaloacetate. This chain is Malate dehydrogenase, found in Thermus thermophilus (strain ATCC BAA-163 / DSM 7039 / HB27).